The sequence spans 712 residues: Amine oxidase [copper-containing] gamma 1 (712 aa).

The N-terminal stretch at 1 to 24 (MAEPSFARLFLLFFSFLLIFATYS) is a signal peptide. N146 and N173 each carry an N-linked (GlcNAc...) asparagine glycan. A disulfide bridge connects residues C188 and C210. Residue 352 to 363 (YMDAGELGLGPT) participates in substrate binding. The Proton acceptor role is filled by D354. Cysteines 373 and 399 form a disulfide. 439–444 (VGNYDY) lines the substrate pocket. The Schiff-base intermediate with substrate; via topaquinone role is filled by Y442. Y442 carries the 2',4',5'-topaquinone modification. 2 residues coordinate Cu cation: H499 and H501. D508, M509, and D510 together coordinate Mn(2+). N-linked (GlcNAc...) asparagine glycosylation is found at N516 and N617. D651 and I652 together coordinate Mn(2+). A Cu cation-binding site is contributed by H662.

This sequence belongs to the copper/topaquinone oxidase family. Homodimer. It depends on Cu cation as a cofactor. Zn(2+) is required as a cofactor. The cofactor is L-topaquinone. Mn(2+) serves as cofactor. In terms of processing, topaquinone (TPQ) is generated by copper-dependent autoxidation of a specific tyrosyl residue. In terms of tissue distribution, mostly expressed in roots, stems and flowers, and, at lower levels, in leaves and cotyledons.

Its subcellular location is the secreted. It localises to the extracellular space. The protein localises to the apoplast. It carries out the reaction a primary methyl amine + O2 + H2O = an aldehyde + H2O2 + NH4(+). Its pathway is amine and polyamine degradation; putrescine degradation. Its function is as follows. Copper amine oxidase that can use putrescine and spermidine as substrates. Required for abscisic acid- (ABA) and polyamine- (PA) and H(2)O(2)-dependent induced nitric oxide (NO) biosynthesis. Involved in ABA signal transduction and in responses to osmotic stress. In Arabidopsis thaliana (Mouse-ear cress), this protein is Amine oxidase [copper-containing] gamma 1.